Here is a 463-residue protein sequence, read N- to C-terminus: Nitrate/nitrite antiporter NarK (463 aa).

Residues 1-37 are Cytoplasmic-facing; it reads MSHSSAPERATGAVITDWRPEDPAFWQQRGQRIASRN. The chain crosses the membrane as a helical span at residues 38-59; that stretch reads LWISVPCLLLAFCVWMLFSAVA. Residues 60-73 are Periplasmic-facing; sequence VNLPKVGFNFTTDQ. The chain crosses the membrane as a helical span at residues 74–95; the sequence is LFMLTALPSVSGALLRVPYSFM. Residue Arg-89 coordinates nitrate. Arg-89 contacts nitrite. Topologically, residues 96 to 102 are cytoplasmic; it reads VPIFGGR. The helical transmembrane segment at 103 to 122 threads the bilayer; the sequence is RWTAFSTGILIIPCVWLGFA. The Periplasmic portion of the chain corresponds to 123–130; that stretch reads VQDTSTPY. Residues 131–151 form a helical membrane-spanning segment; that stretch reads SVFIIISLLCGFAGANFASSM. Residues 152-166 lie on the Cytoplasmic side of the membrane; sequence ANISFFFPKQKQGGA. A helical membrane pass occupies residues 167-189; sequence LGLNGGLGNMGVSVMQLVAPLVV. Asn-175 lines the nitrate pocket. Residues 190–211 lie on the Periplasmic side of the membrane; sequence SLSIFAVFGSQGVKQPDGTELY. The chain crosses the membrane as a helical span at residues 212 to 233; that stretch reads LANASWIWVPFLAIFTIAAWFG. Topologically, residues 234–253 are cytoplasmic; it reads MNDLATSKASIKEQLPVLKR. A helical membrane pass occupies residues 254–281; sequence GHLWIMSLLYLATFGSFIGFSAGFAMLS. Tyr-263 provides a ligand contact to nitrate. Tyr-263 serves as a coordination point for nitrite. Over 282 to 289 the chain is Periplasmic; sequence KTQFPDVQ. Residues 290 to 312 form a helical membrane-spanning segment; it reads ILQYAFFGPFIGALARSAGGALS. At 313–316 the chain is on the cytoplasmic side; that stretch reads DRLG. The helical transmembrane segment at 317–338 threads the bilayer; that stretch reads GTRVTLVNFILMAIFSGLLFLT. The Periplasmic portion of the chain corresponds to 339–347; that stretch reads LPTDGQGGS. A helical membrane pass occupies residues 348-373; the sequence is FMAFFAVFLALFLTAGLGSGSTFQMI. Topologically, residues 374–405 are cytoplasmic; it reads SVIFRKLTMDRVKAEGGSDERAMREAATDTAA. The chain crosses the membrane as a helical span at residues 406–427; the sequence is ALGFISAIGAIGGFFIPKAFGS. Residue Ser-411 coordinates nitrate. At 428–435 the chain is on the periplasmic side; that stretch reads SLALTGSP. A helical transmembrane segment spans residues 436 to 458; it reads VGAMKVFLIFYIACVVITWAVYG. Over 459 to 463 the chain is Cytoplasmic; the sequence is RHSKK.

This sequence belongs to the major facilitator superfamily. Nitrate/nitrite porter (TC 2.A.1.8) family.

It localises to the cell inner membrane. It catalyses the reaction nitrate(in) + nitrite(out) = nitrate(out) + nitrite(in). Functionally, catalyzes nitrate uptake, nitrite uptake and nitrite export across the cytoplasmic membrane. Functions as a nitrate/nitrite exchanger, and protons are unlikely to be co-transported. The chain is Nitrate/nitrite antiporter NarK from Escherichia coli (strain K12).